Reading from the N-terminus, the 700-residue chain is Polyribonucleotide nucleotidyltransferase (700 aa).

Mg(2+) is bound by residues Asp487 and Asp493. Residues 554–613 enclose the KH domain; sequence PRLLTIKIHPDKIRDVIGKGGSTIQAITKDTGTQIDIQDDGTIVIASVNNAAAREAKRRI. The 69-residue stretch at 623-691 folds into the S1 motif domain; the sequence is GRIYEGKVAK…KQGRIRLSIK (69 aa).

The protein belongs to the polyribonucleotide nucleotidyltransferase family. Component of the RNA degradosome, which is a multiprotein complex involved in RNA processing and mRNA degradation. Requires Mg(2+) as cofactor.

Its subcellular location is the cytoplasm. The catalysed reaction is RNA(n+1) + phosphate = RNA(n) + a ribonucleoside 5'-diphosphate. Functionally, involved in mRNA degradation. Catalyzes the phosphorolysis of single-stranded polyribonucleotides processively in the 3'- to 5'-direction. The chain is Polyribonucleotide nucleotidyltransferase from Xylella fastidiosa (strain M12).